A 141-amino-acid chain; its full sequence is Hemoglobin subunit alpha (141 aa).

The Globin domain maps to 1-141 (VLSSKDKANI…VSTVLTSKYR (141 aa)). Ser-3 carries the phosphoserine modification. Lys-7 and Lys-11 each carry N6-succinyllysine. Residue Lys-16 is modified to N6-acetyllysine; alternate. An N6-succinyllysine; alternate modification is found at Lys-16. Position 24 is a phosphotyrosine (Tyr-24). Lys-40 carries the N6-succinyllysine modification. Ser-49 carries the post-translational modification Phosphoserine. Residue His-58 participates in O2 binding. His-87 serves as a coordination point for heme b. Ser-102 is modified (phosphoserine). Thr-108 is subject to Phosphothreonine. Ser-124 carries the post-translational modification Phosphoserine. A phosphothreonine mark is found at Thr-134 and Thr-137. Ser-138 bears the Phosphoserine mark.

Belongs to the globin family. In terms of assembly, heterotetramer of two alpha chains and two beta chains. Red blood cells.

Involved in oxygen transport from the lung to the various peripheral tissues. Its function is as follows. Hemopressin acts as an antagonist peptide of the cannabinoid receptor CNR1. Hemopressin-binding efficiently blocks cannabinoid receptor CNR1 and subsequent signaling. This is Hemoglobin subunit alpha (HBA) from Vicugna pacos (Alpaca).